The chain runs to 277 residues: Myelin proteolipid protein (277 aa).

The Cytoplasmic portion of the chain corresponds to 2-10 (GLLECCARC). S-palmitoyl cysteine attachment occurs at residues Cys6, Cys7, and Cys10. The chain crosses the membrane as a helical span at residues 11-36 (LIGAPFASLVATGLCFFGVALFCGCG). The Extracellular portion of the chain corresponds to 37–59 (HEALTGTEQLIETYFSKNYQDYE). Residues 60 to 88 (YLIDVIHAFQYVIYGTASFFFLYGALLLA) form a helical membrane-spanning segment. Residues 89-151 (EGFYTTGAVR…LGKWLGHPDK (63 aa)) lie on the Cytoplasmic side of the membrane. 3 S-palmitoyl cysteine lipidation sites follow: Cys109, Cys139, and Cys141. Residues 152–178 (FVGITYVLTIVWLLAFACSAVPVYIYF) form a helical membrane-spanning segment. The Extracellular portion of the chain corresponds to 179–238 (NTWTTCQSIAFPTKTTASIGTLCADARMYGVLPWNAFPGKVCGSNLLSICKTSEFQMTFH). 2 cysteine pairs are disulfide-bonded: Cys184/Cys228 and Cys201/Cys220. Thr199 is lipidated: O-palmitoyl threonine. Residues 239–268 (LFIAAFVGAAATLVSLLTFMIAATYNFAVL) form a helical membrane-spanning segment. The Cytoplasmic segment spans residues 269 to 277 (KLMGRGTKF).

This sequence belongs to the myelin proteolipid protein family.

It is found in the cell membrane. Functionally, this is the major myelin protein from the central nervous system. It plays an important role in the formation or maintenance of the multilamellar structure of myelin. This chain is Myelin proteolipid protein (PLP1), found in Gallus gallus (Chicken).